Reading from the N-terminus, the 21-residue chain is Cupiennin-6c (21 aa).

At S21 the chain carries Serine amide.

Expressed by the venom gland.

Its subcellular location is the secreted. This chain is Cupiennin-6c, found in Cupiennius salei (American wandering spider).